The primary structure comprises 105 residues: Thioredoxin (105 aa).

The 102-residue stretch at 2–103 (VKQIESKSAF…KEKLEATIKG (102 aa)) folds into the Thioredoxin domain. Lysine 3 is modified (N6-acetyllysine). The residue at position 8 (lysine 8) is an N6-succinyllysine. Residues cysteine 32 and cysteine 35 each act as nucleophile in the active site. A disulfide bridge connects residues cysteine 32 and cysteine 35. The residue at position 39 (lysine 39) is an N6-acetyllysine. An S-nitrosocysteine mark is found at cysteine 62 and cysteine 69. Cysteine 73 carries the post-translational modification S-nitrosocysteine; alternate. Lysine 94 is subject to N6-acetyllysine; alternate. Lysine 94 carries the N6-succinyllysine; alternate modification.

The protein belongs to the thioredoxin family. Homodimer; disulfide-linked. Interacts with TXNIP through the redox-active site. Interacts with MAP3K5 and CASP3. Interacts with APEX1; the interaction stimulates the FOS/JUN AP-1 DNA-binding activity in a redox-dependent manner. In terms of processing, in the fully reduced protein, both Cys-69 and Cys-73 are nitrosylated in response to nitric oxide (NO). When two disulfide bonds are present in the protein, only Cys-73 is nitrosylated. Cys-73 can serve as donor for nitrosylation of target proteins.

It localises to the nucleus. It is found in the cytoplasm. The protein localises to the secreted. Its function is as follows. Participates in various redox reactions through the reversible oxidation of its active center dithiol to a disulfide and catalyzes dithiol-disulfide exchange reactions. Plays a role in the reversible S-nitrosylation of cysteine residues in target proteins, and thereby contributes to the response to intracellular nitric oxide. Nitrosylates the active site Cys of CASP3 in response to nitric oxide (NO), and thereby inhibits caspase-3 activity. Induces the FOS/JUN AP-1 DNA binding activity in ionizing radiation (IR) cells through its oxidation/reduction status and stimulates AP-1 transcriptional activity. The chain is Thioredoxin (TXN) from Equus caballus (Horse).